The primary structure comprises 263 residues: Transmembrane protein 176B (263 aa).

The next 4 helical transmembrane spans lie at 61–81 (LGVT…CLYF), 89–109 (AFGC…GTIV), 121–141 (VSCL…VLGV), and 197–217 (LFLA…VVSV). Ser231, Ser240, and Ser253 each carry phosphoserine. Residues 239–263 (ESERKLLDGHPAPASPAKEKIPAIL) form a disordered region.

It belongs to the TMEM176 family. In terms of tissue distribution, ubiquitously expressed with higher expression in lung, liver, kidney and colon. Expressed in cerebellar granule cells.

It is found in the nucleus membrane. In terms of biological role, may play a role in the process of maturation of dendritic cells. Required for the development of cerebellar granule cells. The protein is Transmembrane protein 176B (Tmem176b) of Mus musculus (Mouse).